A 216-amino-acid chain; its full sequence is Histidine biosynthesis bifunctional protein HisIE (216 aa).

Residues 1-127 are phosphoribosyl-AMP cyclohydrolase; it reads MSFIDSLSPQ…GKIVAPPGDT (127 aa). The segment at 128–216 is phosphoribosyl-ATP pyrophosphohydrolase; that stretch reads LSQVFQVICD…VYRKLQERRR (89 aa).

The protein in the N-terminal section; belongs to the PRA-CH family. This sequence in the C-terminal section; belongs to the PRA-PH family.

It is found in the cytoplasm. The enzyme catalyses 1-(5-phospho-beta-D-ribosyl)-ATP + H2O = 1-(5-phospho-beta-D-ribosyl)-5'-AMP + diphosphate + H(+). The catalysed reaction is 1-(5-phospho-beta-D-ribosyl)-5'-AMP + H2O = 1-(5-phospho-beta-D-ribosyl)-5-[(5-phospho-beta-D-ribosylamino)methylideneamino]imidazole-4-carboxamide. The protein operates within amino-acid biosynthesis; L-histidine biosynthesis; L-histidine from 5-phospho-alpha-D-ribose 1-diphosphate: step 2/9. It functions in the pathway amino-acid biosynthesis; L-histidine biosynthesis; L-histidine from 5-phospho-alpha-D-ribose 1-diphosphate: step 3/9. This chain is Histidine biosynthesis bifunctional protein HisIE (hisI), found in Nostoc sp. (strain PCC 7120 / SAG 25.82 / UTEX 2576).